Here is a 63-residue protein sequence, read N- to C-terminus: SPbeta prophage-derived uncharacterized protein YomP (63 aa).

The polypeptide is SPbeta prophage-derived uncharacterized protein YomP (yomP) (Bacillus subtilis (strain 168)).